Reading from the N-terminus, the 245-residue chain is 1-(5-phosphoribosyl)-5-[(5-phosphoribosylamino)methylideneamino] imidazole-4-carboxamide isomerase (245 aa).

Catalysis depends on Asp-8, which acts as the Proton acceptor. Catalysis depends on Asp-129, which acts as the Proton donor.

Belongs to the HisA/HisF family.

It localises to the cytoplasm. It carries out the reaction 1-(5-phospho-beta-D-ribosyl)-5-[(5-phospho-beta-D-ribosylamino)methylideneamino]imidazole-4-carboxamide = 5-[(5-phospho-1-deoxy-D-ribulos-1-ylimino)methylamino]-1-(5-phospho-beta-D-ribosyl)imidazole-4-carboxamide. It participates in amino-acid biosynthesis; L-histidine biosynthesis; L-histidine from 5-phospho-alpha-D-ribose 1-diphosphate: step 4/9. This chain is 1-(5-phosphoribosyl)-5-[(5-phosphoribosylamino)methylideneamino] imidazole-4-carboxamide isomerase, found in Rhodopseudomonas palustris (strain BisB18).